A 206-amino-acid polypeptide reads, in one-letter code: Octanoyltransferase (206 aa).

In terms of domain architecture, BPL/LPL catalytic spans 30–206 (PETNDEIWLV…EFVTLLNNSI (177 aa)). Residues 69 to 76 (RGGQVTYH), 137 to 139 (SLG), and 150 to 152 (GIA) contribute to the substrate site. The active-site Acyl-thioester intermediate is the cysteine 168.

It belongs to the LipB family.

Its subcellular location is the cytoplasm. It carries out the reaction octanoyl-[ACP] + L-lysyl-[protein] = N(6)-octanoyl-L-lysyl-[protein] + holo-[ACP] + H(+). Its pathway is protein modification; protein lipoylation via endogenous pathway; protein N(6)-(lipoyl)lysine from octanoyl-[acyl-carrier-protein]: step 1/2. In terms of biological role, catalyzes the transfer of endogenously produced octanoic acid from octanoyl-acyl-carrier-protein onto the lipoyl domains of lipoate-dependent enzymes. Lipoyl-ACP can also act as a substrate although octanoyl-ACP is likely to be the physiological substrate. The chain is Octanoyltransferase from Francisella tularensis subsp. mediasiatica (strain FSC147).